The primary structure comprises 403 residues: Putative glutamate--cysteine ligase 2 (403 aa).

Residues 370–403 form a disordered region; that stretch reads ESAAQRRAPQAARRRIRASSEPLGPMSMWPERLH.

It belongs to the glutamate--cysteine ligase type 2 family. YbdK subfamily.

The catalysed reaction is L-cysteine + L-glutamate + ATP = gamma-L-glutamyl-L-cysteine + ADP + phosphate + H(+). ATP-dependent carboxylate-amine ligase which exhibits weak glutamate--cysteine ligase activity. The sequence is that of Putative glutamate--cysteine ligase 2 from Bordetella avium (strain 197N).